A 201-amino-acid chain; its full sequence is Large ribosomal subunit protein uL4 (201 aa).

A disordered region spans residues alanine 45–glycine 66.

It belongs to the universal ribosomal protein uL4 family. In terms of assembly, part of the 50S ribosomal subunit.

In terms of biological role, one of the primary rRNA binding proteins, this protein initially binds near the 5'-end of the 23S rRNA. It is important during the early stages of 50S assembly. It makes multiple contacts with different domains of the 23S rRNA in the assembled 50S subunit and ribosome. Functionally, forms part of the polypeptide exit tunnel. The polypeptide is Large ribosomal subunit protein uL4 (Aeromonas hydrophila subsp. hydrophila (strain ATCC 7966 / DSM 30187 / BCRC 13018 / CCUG 14551 / JCM 1027 / KCTC 2358 / NCIMB 9240 / NCTC 8049)).